A 384-amino-acid polypeptide reads, in one-letter code: Dual-specificity RNA methyltransferase RlmN (384 aa).

Catalysis depends on glutamate 93, which acts as the Proton acceptor. The Radical SAM core domain maps to 99-339 (EETRGTLCVS…TTIRKTRGDD (241 aa)). A disulfide bridge links cysteine 106 with cysteine 344. [4Fe-4S] cluster-binding residues include cysteine 113, cysteine 117, and cysteine 120. Residues 170-171 (GE), serine 202, 224-226 (SLH), and asparagine 301 each bind S-adenosyl-L-methionine. Cysteine 344 acts as the S-methylcysteine intermediate in catalysis.

It belongs to the radical SAM superfamily. RlmN family. [4Fe-4S] cluster serves as cofactor.

The protein localises to the cytoplasm. The enzyme catalyses adenosine(2503) in 23S rRNA + 2 reduced [2Fe-2S]-[ferredoxin] + 2 S-adenosyl-L-methionine = 2-methyladenosine(2503) in 23S rRNA + 5'-deoxyadenosine + L-methionine + 2 oxidized [2Fe-2S]-[ferredoxin] + S-adenosyl-L-homocysteine. It carries out the reaction adenosine(37) in tRNA + 2 reduced [2Fe-2S]-[ferredoxin] + 2 S-adenosyl-L-methionine = 2-methyladenosine(37) in tRNA + 5'-deoxyadenosine + L-methionine + 2 oxidized [2Fe-2S]-[ferredoxin] + S-adenosyl-L-homocysteine. Specifically methylates position 2 of adenine 2503 in 23S rRNA and position 2 of adenine 37 in tRNAs. m2A2503 modification seems to play a crucial role in the proofreading step occurring at the peptidyl transferase center and thus would serve to optimize ribosomal fidelity. The protein is Dual-specificity RNA methyltransferase RlmN of Cupriavidus pinatubonensis (strain JMP 134 / LMG 1197) (Cupriavidus necator (strain JMP 134)).